A 116-amino-acid chain; its full sequence is Large ribosomal subunit protein uL24 (116 aa).

The segment at 1 to 27 is disordered; it reads MAGRKSSTPTRHKMHVKTGDTVQVISG.

It belongs to the universal ribosomal protein uL24 family. Part of the 50S ribosomal subunit.

In terms of biological role, one of two assembly initiator proteins, it binds directly to the 5'-end of the 23S rRNA, where it nucleates assembly of the 50S subunit. Its function is as follows. One of the proteins that surrounds the polypeptide exit tunnel on the outside of the subunit. This Picosynechococcus sp. (strain ATCC 27264 / PCC 7002 / PR-6) (Agmenellum quadruplicatum) protein is Large ribosomal subunit protein uL24.